We begin with the raw amino-acid sequence, 195 residues long: Toxin protein Tse4 (195 aa).

Transmembrane regions (helical) follow at residues 20–40 (ASGG…ITLL), 116–136 (YVEL…LFGL), 140–160 (LLAA…GASM), and 171–191 (ALLM…AAYL).

The protein resides in the host membrane. It is found in the secreted. Its function is as follows. Toxin secreted by the H1 type VI (H1-T6SS) secretion system into the periplasm of recipient cells. The sequence is that of Toxin protein Tse4 from Pseudomonas aeruginosa (strain ATCC 15692 / DSM 22644 / CIP 104116 / JCM 14847 / LMG 12228 / 1C / PRS 101 / PAO1).